The following is a 139-amino-acid chain: Nucleoside diphosphate kinase (139 aa).

The ATP site is built by K10, F58, R86, T92, R103, and N113. The active-site Pros-phosphohistidine intermediate is the H116.

It belongs to the NDK family. As to quaternary structure, homotetramer. It depends on Mg(2+) as a cofactor.

Its subcellular location is the cytoplasm. It catalyses the reaction a 2'-deoxyribonucleoside 5'-diphosphate + ATP = a 2'-deoxyribonucleoside 5'-triphosphate + ADP. It carries out the reaction a ribonucleoside 5'-diphosphate + ATP = a ribonucleoside 5'-triphosphate + ADP. Its function is as follows. Major role in the synthesis of nucleoside triphosphates other than ATP. The ATP gamma phosphate is transferred to the NDP beta phosphate via a ping-pong mechanism, using a phosphorylated active-site intermediate. The polypeptide is Nucleoside diphosphate kinase (Caulobacter vibrioides (strain ATCC 19089 / CIP 103742 / CB 15) (Caulobacter crescentus)).